Consider the following 166-residue polypeptide: Lipoprotein signal peptidase (166 aa).

3 helical membrane-spanning segments follow: residues 12–32 (WLWL…LILQ), 70–90 (WFFA…MYRS), and 102–122 (ALII…GFVV). Active-site residues include Asp-123 and Asp-141. A helical transmembrane segment spans residues 137-157 (FNLADSAICIGAALIVLEGFL).

This sequence belongs to the peptidase A8 family.

It localises to the cell inner membrane. The enzyme catalyses Release of signal peptides from bacterial membrane prolipoproteins. Hydrolyzes -Xaa-Yaa-Zaa-|-(S,diacylglyceryl)Cys-, in which Xaa is hydrophobic (preferably Leu), and Yaa (Ala or Ser) and Zaa (Gly or Ala) have small, neutral side chains.. Its pathway is protein modification; lipoprotein biosynthesis (signal peptide cleavage). In terms of biological role, this protein specifically catalyzes the removal of signal peptides from prolipoproteins. In Salmonella choleraesuis (strain SC-B67), this protein is Lipoprotein signal peptidase.